Reading from the N-terminus, the 263-residue chain is Small ribosomal subunit protein eS4 (263 aa).

One can recognise an S4 RNA-binding domain in the interval Leu42–Asp104.

This sequence belongs to the eukaryotic ribosomal protein eS4 family.

The polypeptide is Small ribosomal subunit protein eS4 (rps4) (Ictalurus punctatus (Channel catfish)).